Here is a 405-residue protein sequence, read N- to C-terminus: uncharacterized protein (405 aa).

This is an uncharacterized protein from Equine herpesvirus 2 (strain 86/87) (EHV-2).